Here is a 256-residue protein sequence, read N- to C-terminus: Necrosis-inducing protein NPP1 (256 aa).

Residues 111-121 carry the Conserved undecapeptide motif motif; the sequence is AIMYAWYFPKG. The Conserved heptapeptide motif signature appears at 133-139; the sequence is GHRHEWE.

The protein belongs to the Necrosis inducing protein (NPP1) family.

It is found in the secreted. Its function is as follows. Secreted effector that acts as a pathogen-associated molecular pattern (PAMP) recognized by the plant immune system. This is Necrosis-inducing protein NPP1 from Phytophthora cinnamomi (Cinnamon fungus).